The sequence spans 61 residues: Small ribosomal subunit protein uS14 (61 aa).

Zn(2+)-binding residues include C24, C27, C40, and C43.

This sequence belongs to the universal ribosomal protein uS14 family. Zinc-binding uS14 subfamily. As to quaternary structure, part of the 30S ribosomal subunit. Contacts proteins S3 and S10. The cofactor is Zn(2+).

Its function is as follows. Binds 16S rRNA, required for the assembly of 30S particles and may also be responsible for determining the conformation of the 16S rRNA at the A site. The chain is Small ribosomal subunit protein uS14 from Bifidobacterium longum (strain DJO10A).